The chain runs to 696 residues: Polyphosphate kinase (696 aa).

Position 45 (asparagine 45) interacts with ATP. Mg(2+) contacts are provided by arginine 373 and arginine 403. In terms of domain architecture, PLD phosphodiesterase spans 428–462 (PGLKIHSKLLMISRREGDDIIRYAHIGTGNFHEKT). The active-site Phosphohistidine intermediate is histidine 433. ATP is bound by residues tyrosine 466, arginine 562, and histidine 590.

Belongs to the polyphosphate kinase 1 (PPK1) family. It depends on Mg(2+) as a cofactor. In terms of processing, an intermediate of this reaction is the autophosphorylated ppk in which a phosphate is covalently linked to a histidine residue through a N-P bond.

The enzyme catalyses [phosphate](n) + ATP = [phosphate](n+1) + ADP. Functionally, catalyzes the reversible transfer of the terminal phosphate of ATP to form a long-chain polyphosphate (polyP). In Vibrio parahaemolyticus serotype O3:K6 (strain RIMD 2210633), this protein is Polyphosphate kinase.